Here is a 171-residue protein sequence, read N- to C-terminus: MAANTDRNSKPSVYLQEPNEVQGVFNRFDANGDGKISGDELAGVLKALGSNTSKEEIGRIMEEIDTDKDGFINVQEFAAFVKAETDPYPSSGGENELKEAFELYDQDHNGLISSVELHKILTRLGERYAEHDCVEMIKSVDSDGDGYVSFEEFKKMMTNKSGNNSQAEPPK.

4 consecutive EF-hand domains span residues 16 to 51 (QEPN…LGSN), 52 to 87 (TSKE…ETDP), 92 to 127 (GGEN…LGER), and 128 to 163 (YAEH…KSGN). Residues aspartate 29, asparagine 31, aspartate 33, lysine 35, glutamate 40, aspartate 65, aspartate 67, aspartate 69, glutamate 76, aspartate 105, aspartate 107, asparagine 109, glutamate 116, aspartate 141, aspartate 143, aspartate 145, tyrosine 147, and glutamate 152 each contribute to the Ca(2+) site.

Homodimer. In terms of tissue distribution, expressed in pollen.

This Olea europaea (Common olive) protein is Calcium-binding allergen Ole e 8.